The sequence spans 371 residues: Nuclear hormone receptor family member nhr-51 (371 aa).

A DNA-binding region (nuclear receptor) is located at residues 2–77 (NKNCLICHRK…MGMQAFPRRV (76 aa)). 2 consecutive NR C4-type zinc fingers follow at residues 5 to 25 (CLICHRKAAGQHYGVLSCFAC) and 41 to 60 (CQKFNKCYEKFIILPKCKAC). Residues 98–337 (MDEQRHWRML…KQLVTDTFVD (240 aa)) enclose the NR LBD domain.

The protein belongs to the nuclear hormone receptor family.

The protein localises to the nucleus. In terms of biological role, orphan nuclear receptor. The protein is Nuclear hormone receptor family member nhr-51 (nhr-51) of Caenorhabditis elegans.